A 242-amino-acid polypeptide reads, in one-letter code: Small ribosomal subunit protein uS2 (242 aa).

This sequence belongs to the universal ribosomal protein uS2 family.

The chain is Small ribosomal subunit protein uS2 from Shewanella oneidensis (strain ATCC 700550 / JCM 31522 / CIP 106686 / LMG 19005 / NCIMB 14063 / MR-1).